A 209-amino-acid polypeptide reads, in one-letter code: dITP/XTP pyrophosphatase (209 aa).

22 to 27 (SHNQGK) lines the substrate pocket. The active-site Proton acceptor is Asp83. Asp83 provides a ligand contact to Mg(2+). Substrate is bound by residues Ser84, 167–170 (FGYD), Lys190, and 195–196 (HR).

The protein belongs to the HAM1 NTPase family. Homodimer. Mg(2+) serves as cofactor.

The catalysed reaction is XTP + H2O = XMP + diphosphate + H(+). It carries out the reaction dITP + H2O = dIMP + diphosphate + H(+). It catalyses the reaction ITP + H2O = IMP + diphosphate + H(+). Pyrophosphatase that catalyzes the hydrolysis of nucleoside triphosphates to their monophosphate derivatives, with a high preference for the non-canonical purine nucleotides XTP (xanthosine triphosphate), dITP (deoxyinosine triphosphate) and ITP. Seems to function as a house-cleaning enzyme that removes non-canonical purine nucleotides from the nucleotide pool, thus preventing their incorporation into DNA/RNA and avoiding chromosomal lesions. In Zymomonas mobilis subsp. mobilis (strain ATCC 31821 / ZM4 / CP4), this protein is dITP/XTP pyrophosphatase.